The chain runs to 353 residues: Type 2 DNA topoisomerase 6 subunit A (353 aa).

Residues 2-138 (NRREIAINKL…LGLMPEEDGA (137 aa)) enclose the Topo IIA-type catalytic domain. The active-site O-(5'-phospho-DNA)-tyrosine intermediate is Y96. Mg(2+) contacts are provided by E186 and D238.

It belongs to the TOP6A family. Homodimer. Heterotetramer of two Top6A and two Top6B chains. The cofactor is Mg(2+).

The catalysed reaction is ATP-dependent breakage, passage and rejoining of double-stranded DNA.. Functionally, relaxes both positive and negative superturns and exhibits a strong decatenase activity. This Methanothermobacter thermautotrophicus (strain ATCC 29096 / DSM 1053 / JCM 10044 / NBRC 100330 / Delta H) (Methanobacterium thermoautotrophicum) protein is Type 2 DNA topoisomerase 6 subunit A.